A 452-amino-acid chain; its full sequence is PTS system N-acetylglucosamine-specific EIICB component (452 aa).

The region spanning 1–361 (MLSFLQKLGK…LNLKTPGRED (361 aa)) is the PTS EIIC type-1 domain. 9 helical membrane-spanning segments follow: residues 8–28 (LGKSFMLPIAVLPAVGIILAL), 42–62 (AGTAVFDHLPLIFAIGIAIGI), 91–111 (TNNMAVFGGIIAGLIAGYTYN), 130–150 (LVPILTAIITIILAGIFGVVW), 163–183 (WMLGLGGIGAGIFGLFNRLLI), 223–243 (MTGFFPIMMFGLPAACLAMVV), 257–277 (MIGFALTAFITGITEPIEFAF), 279–299 (FLSPLLYAVHAVLTGLSLFIV), and 329–349 (LLLLVGICYAAVYFIVFYVLI). The region spanning 375-452 (DVNENIMLKG…AAEELRAAVK (78 aa)) is the PTS EIIB type-1 domain. Cys397 (phosphocysteine intermediate; for EIIB activity) is an active-site residue.

As to quaternary structure, interacts with FloT.

It localises to the cell membrane. Its subcellular location is the membrane raft. It catalyses the reaction N(pros)-phospho-L-histidyl-[protein] + N-acetyl-D-glucosamine(out) = N-acetyl-D-glucosamine 6-phosphate(in) + L-histidyl-[protein]. The phosphoenolpyruvate-dependent sugar phosphotransferase system (sugar PTS), a major carbohydrate active -transport system, catalyzes the phosphorylation of incoming sugar substrates concomitantly with their translocation across the cell membrane. This system is involved in N-acetylglucosamine transport. This chain is PTS system N-acetylglucosamine-specific EIICB component (nagP), found in Bacillus subtilis (strain 168).